We begin with the raw amino-acid sequence, 864 residues long: Leucine--tRNA ligase (864 aa).

Residues 42-52 (PYPSGKLHMGH) carry the 'HIGH' region motif. A 'KMSKS' region motif is present at residues 624–628 (KMSKS). Position 627 (lysine 627) interacts with ATP.

The protein belongs to the class-I aminoacyl-tRNA synthetase family.

The protein resides in the cytoplasm. The catalysed reaction is tRNA(Leu) + L-leucine + ATP = L-leucyl-tRNA(Leu) + AMP + diphosphate. The protein is Leucine--tRNA ligase of Burkholderia pseudomallei (strain 668).